Reading from the N-terminus, the 232-residue chain is MRFPTPLIPATLIKRYKRFLADCRLEDGREITAHCANPGSMMGLAEPGMRVWLEPNDDPKKKLKYGWRLVEHTNGHFTGVDTSVPNRALKAALEAHEIAEFAAYSEVQAEVKYGQNSRIDFLLTDAKLPRCYVEVKSVTLSRQPGLAEFPDSVTARGTKHLRELAAMAEAGHRAVMLYLVQRTDCDRFALAADIDPAYAAEFETAHAKGVERLVIGTTITPEGVKIGDILPS.

This sequence belongs to the SfsA family.

The sequence is that of Sugar fermentation stimulation protein homolog from Ruegeria sp. (strain TM1040) (Silicibacter sp.).